A 356-amino-acid polypeptide reads, in one-letter code: Magnesium-protoporphyrin IX monomethyl ester [oxidative] cyclase (356 aa).

Belongs to the AcsF family. Fe cation is required as a cofactor.

It catalyses the reaction Mg-protoporphyrin IX 13-monomethyl ester + 3 NADPH + 3 O2 + 2 H(+) = 3,8-divinyl protochlorophyllide a + 3 NADP(+) + 5 H2O. Its pathway is porphyrin-containing compound metabolism; chlorophyll biosynthesis (light-independent). In terms of biological role, catalyzes the formation of the isocyclic ring in chlorophyll biosynthesis. Mediates the cyclase reaction, which results in the formation of divinylprotochlorophyllide (Pchlide) characteristic of all chlorophylls from magnesium-protoporphyrin IX 13-monomethyl ester (MgPMME). In Synechococcus sp. (strain CC9605), this protein is Magnesium-protoporphyrin IX monomethyl ester [oxidative] cyclase.